A 197-amino-acid chain; its full sequence is Proteinase inhibitor type-2 (197 aa).

The first 24 residues, 1 to 24 (MAVHKVSFVAHLLVLGMFLLLVDA), serve as a signal peptide directing secretion. A run of 3 repeats spans residues 24-80 (AKAC…DPKN), 81-140 (PNVC…DEPK), and 141-196 (SCTT…PQSA). 8 disulfide bridges follow: C27/C115, C31/C111, C39/C121, C51/C88, C54/C72, C55/C84, C61/C97, and C114/C132.

Belongs to the protease inhibitor I20 (potato type II proteinase inhibitor) family.

This Nicotiana tabacum (Common tobacco) protein is Proteinase inhibitor type-2.